Reading from the N-terminus, the 295-residue chain is Protease HtpX (295 aa).

2 helical membrane-spanning segments follow: residues 4-24 (ILLF…TLSL) and 41-61 (SQLL…SLFI). Histidine 147 provides a ligand contact to Zn(2+). Glutamate 148 is a catalytic residue. Histidine 151 lines the Zn(2+) pocket. Transmembrane regions (helical) follow at residues 158–178 (VTLA…ARII) and 199–219 (IATI…VMWF). Glutamate 224 provides a ligand contact to Zn(2+).

The protein belongs to the peptidase M48B family. The cofactor is Zn(2+).

The protein localises to the cell inner membrane. The polypeptide is Protease HtpX (Pseudomonas fluorescens (strain Pf0-1)).